The following is a 517-amino-acid chain: Rop guanine nucleotide exchange factor 9 (517 aa).

Disordered regions lie at residues 16–76 (NLDR…SETE) and 428–517 (GEET…KDRH). Polar residues predominate over residues 39-63 (MPESQTQDSLGGSPVETSRPMTSRL). Residues 65 to 429 (SRRQDKQQSE…SLARKQCTGE (365 aa)) form the PRONE domain. Over residues 66–76 (RRQDKQQSETE) the composition is skewed to basic and acidic residues. A compositionally biased stretch (polar residues) spans 440-452 (ETDSASAGSSNYS).

In terms of assembly, interacts with ARAC11/ROP1 and ARAC10/ROP11. Interacts with PRK6. In terms of tissue distribution, expressed in pollen grains and pollen tubes.

Its subcellular location is the cell membrane. Its function is as follows. Guanine-nucleotide exchange factor (GEF) that acts as an activator of Rop (Rho of plants) GTPases by promoting the exchange of GDP for GTP. This is Rop guanine nucleotide exchange factor 9 from Arabidopsis thaliana (Mouse-ear cress).